The sequence spans 183 residues: Seminal plasma protein BSP-30 kDa (183 aa).

Residues 1-25 (MAPLVGLFLIWAGASVFQQLHPVNG) form the signal peptide. The segment at 23-47 (VNGGDIPDPGSKPTPPGMADELPTE) is disordered. 6 O-linked (GalNAc...) threonine glycosylation sites follow: Thr-36, Thr-46, Thr-57, Thr-58, Thr-59, and Thr-64. Fibronectin type-II domains are found at residues 92-136 (FEGP…FCTE) and 137-183 (RDEP…WKYC). Intrachain disulfides connect Cys-97–Cys-121, Cys-111–Cys-134, Cys-142–Cys-168, and Cys-156–Cys-183.

This sequence belongs to the seminal plasma protein family.

It localises to the secreted. Functionally, binds to spermatozoa upon ejaculation and may play a role in sperm capacitation. Displays heparin-, gelatin- and phospholipid-binding activities. The sequence is that of Seminal plasma protein BSP-30 kDa from Bos taurus (Bovine).